Consider the following 1960-residue polypeptide: Myosin-9 (1960 aa).

Ala2 carries the post-translational modification N-acetylalanine. Residues 2–838 form a mediates interaction with LIMCH1 region; the sequence is AQQAADKYLY…RLFTKVKPLL (837 aa). Lys8 carries the N6-acetyllysine modification. Tyr11 carries the phosphotyrosine modification. One can recognise a Myosin N-terminal SH3-like domain in the interval 27–77; sequence AAKKLVWVPSSKNGFEPASLKEEVGEEAIVELVENGKKVKVNKDDIQKMNP. Residues 81 to 776 enclose the Myosin motor domain; it reads SKVEDMAELT…VLAHLEEERD (696 aa). The residue at position 102 (Lys102) is an N6-acetyllysine. 174 to 181 provides a ligand contact to ATP; it reads GESGAGKT. An N6-acetyllysine mark is found at Lys299, Lys435, and Lys613. Position 628 is a phosphoserine (Ser628). The tract at residues 654 to 676 is actin-binding; the sequence is LAKLMATLRNTNPNFVRCIIPNH. Tyr754 carries the post-translational modification Phosphotyrosine. Residues 779-808 form the IQ domain; that stretch reads ITDVIIGFQACCRGYLARKAFAKRQQQLTA. Residues 841–1926 adopt a coiled-coil conformation; it reads IRHEDELLAK…LKNKLRRGDL (1086 aa). Lys850 is subject to N6-succinyllysine. 3 positions are modified to N6-acetyllysine: Lys860, Lys975, and Lys1024. Over residues 1035-1055 the composition is skewed to basic and acidic residues; that stretch reads RLRREEKQRQELEKTRRKLEG. The interval 1035-1057 is disordered; it reads RLRREEKQRQELEKTRRKLEGDS. Position 1114 is a phosphoserine (Ser1114). Residues 1117 to 1167 are disordered; sequence QEDLESERASRNKAEKQKRDLGEELEALKTELEDTLDSTAAQQELRSKREQ. The span at 1122-1148 shows a compositional bias: basic and acidic residues; the sequence is SERASRNKAEKQKRDLGEELEALKTEL. Lys1234 and Lys1249 each carry N6-acetyllysine. The tract at residues 1327–1352 is disordered; it reads LSTKLKQMEDEKNSFREQLEEEEEAK. Basic and acidic residues predominate over residues 1332–1352; that stretch reads KQMEDEKNSFREQLEEEEEAK. N6-acetyllysine occurs at positions 1357, 1392, 1404, 1410, 1459, and 1638. Lys1669 carries the N6-succinyllysine modification. A Phosphoserine modification is found at Ser1714. A disordered region spans residues 1768–1788; sequence LERSHAQKNENARQQLERQNK. 3 positions are modified to N6-acetyllysine: Lys1793, Lys1802, and Lys1845. The tract at residues 1877–1908 is disordered; the sequence is RQLEEAEEEAQRANASRRKLQRELEDATETAD. Residue Arg1923 is modified to Omega-N-methylarginine. Thr1939 carries the phosphothreonine modification. The segment at 1939 to 1960 is disordered; it reads TGDCSDEEVDGKADGADAKAAE. Ser1943 carries the phosphoserine modification. A compositionally biased stretch (basic and acidic residues) spans 1948 to 1960; that stretch reads DGKADGADAKAAE.

The protein belongs to the TRAFAC class myosin-kinesin ATPase superfamily. Myosin family. As to quaternary structure, myosin is a hexameric protein that consists of 2 heavy chain subunits (MHC), 2 alkali light chain subunits (MLC) and 2 regulatory light chain subunits (MLC-2). Interacts with RASIP1. Interacts with DDR1. Interacts with PDLIM2. Interacts with SVIL. Interacts with HTRA3. Interacts with Myo7a. Interacts with CFAP95. Interacts with LIMCH1; independently of the integration of MYH9 into the myosin complex. Interacts with RAB3A. Interacts with ZBED4. Interacts with S100A4; this interaction increases cell motility. ISGylated. Post-translationally, ubiquitination.

The protein localises to the cytoplasm. It localises to the cytoskeleton. Its subcellular location is the cell cortex. The protein resides in the cytoplasmic vesicle. It is found in the secretory vesicle. The protein localises to the cortical granule. Its function is as follows. Cellular myosin that appears to play a role in cytokinesis, cell shape, and specialized functions such as secretion and capping. Required for cortical actin clearance prior to oocyte exocytosis. Promotes cell motility in conjunction with S100A4. During cell spreading, plays an important role in cytoskeleton reorganization, focal contact formation (in the margins but not the central part of spreading cells), and lamellipodial retraction; this function is mechanically antagonized by MYH10. The chain is Myosin-9 (Myh9) from Mus musculus (Mouse).